We begin with the raw amino-acid sequence, 147 residues long: Large ribosomal subunit protein uL13 (147 aa).

Belongs to the universal ribosomal protein uL13 family. As to quaternary structure, part of the 50S ribosomal subunit.

Functionally, this protein is one of the early assembly proteins of the 50S ribosomal subunit, although it is not seen to bind rRNA by itself. It is important during the early stages of 50S assembly. The sequence is that of Large ribosomal subunit protein uL13 from Streptomyces griseus subsp. griseus (strain JCM 4626 / CBS 651.72 / NBRC 13350 / KCC S-0626 / ISP 5235).